Consider the following 292-residue polypeptide: Homoserine kinase (292 aa).

84–94 (PFSRGLGSSSA) contributes to the ATP binding site.

Belongs to the GHMP kinase family. Homoserine kinase subfamily.

It is found in the cytoplasm. The catalysed reaction is L-homoserine + ATP = O-phospho-L-homoserine + ADP + H(+). It functions in the pathway amino-acid biosynthesis; L-threonine biosynthesis; L-threonine from L-aspartate: step 4/5. Functionally, catalyzes the ATP-dependent phosphorylation of L-homoserine to L-homoserine phosphate. In Campylobacter hominis (strain ATCC BAA-381 / DSM 21671 / CCUG 45161 / LMG 19568 / NCTC 13146 / CH001A), this protein is Homoserine kinase.